Consider the following 305-residue polypeptide: Syntaxin-123 (305 aa).

An N-acetylmethionine modification is found at Met1. At Met1–Trp278 the chain is on the cytoplasmic side. The stretch at Val46 to Glu66 forms a coiled coil. One can recognise a t-SNARE coiled-coil homology domain in the interval Leu206–Ala268. A helical; Anchor for type IV membrane protein membrane pass occupies residues Ala279 to Phe299. Residues Asn300–Pro305 are Vesicular-facing.

It belongs to the syntaxin family. In terms of assembly, part of the t-SNARE complex. Expressed in tips of root hairs.

Its subcellular location is the membrane. Functionally, vesicle trafficking protein that functions in the secretory pathway. Acts in coordination with SYP132 to mediate tip-focused membrane trafficking for root hair tip growth. Functions in root hair elongation by forming SNARE complexes with VAMP721,VAMP722 or VAMP724. This Arabidopsis thaliana (Mouse-ear cress) protein is Syntaxin-123.